Here is a 133-residue protein sequence, read N- to C-terminus: Small ribosomal subunit protein uS8 (133 aa).

This sequence belongs to the universal ribosomal protein uS8 family. In terms of assembly, part of the 30S ribosomal subunit. Contacts proteins S5 and S12.

Functionally, one of the primary rRNA binding proteins, it binds directly to 16S rRNA central domain where it helps coordinate assembly of the platform of the 30S subunit. The chain is Small ribosomal subunit protein uS8 from Chlamydia felis (strain Fe/C-56) (Chlamydophila felis).